Here is a 148-residue protein sequence, read N- to C-terminus: 3-dehydroquinate dehydratase (148 aa).

The active-site Proton acceptor is the Tyr22. Residues Asn73, His79, and Asp86 each contribute to the substrate site. His99 (proton donor) is an active-site residue. Substrate contacts are provided by residues 100–101 (LS) and Arg110.

This sequence belongs to the type-II 3-dehydroquinase family. As to quaternary structure, homododecamer.

The enzyme catalyses 3-dehydroquinate = 3-dehydroshikimate + H2O. Its pathway is metabolic intermediate biosynthesis; chorismate biosynthesis; chorismate from D-erythrose 4-phosphate and phosphoenolpyruvate: step 3/7. Catalyzes a trans-dehydration via an enolate intermediate. The polypeptide is 3-dehydroquinate dehydratase (Prochlorococcus marinus (strain MIT 9211)).